The following is a 201-amino-acid chain: Troponin I (201 aa).

Ala-1 is subject to N-acetylalanine. The segment covering 1-33 (ADKAKAAEEAKKKQDDIDRKKAEVRKRLEEQSL) has biased composition (basic and acidic residues). The segment at 1–45 (ADKAKAAEEAKKKQDDIDRKKAEVRKRLEEQSLKKQKKGFMTPER) is disordered. Residues 108–117 (IESDKYDVEL) are troponin T-interaction. An actin-binding region spans residues 135–148 (DLRGKFIKPTLKKV). N6,N6,N6-trimethyllysine occurs at positions 142 and 146. The disordered stretch occupies residues 182 to 201 (EDDKGATEGDGPAAEEVAAE).

It belongs to the troponin I family.

Its function is as follows. Troponin I is the actomyosin ATPase inhibitory subunit present in the thin filament regulatory complex. This Astacus leptodactylus (Turkish narrow-clawed crayfish) protein is Troponin I.